The sequence spans 338 residues: Trace amine-associated receptor 9 (338 aa).

Residues 1-23 are Extracellular-facing; it reads MELCYENVNGSCIKSSYSPWPRA. N-linked (GlcNAc...) asparagine glycosylation is present at Asn9. 2 disulfide bridges follow: Cys12–Cys176 and Cys95–Cys180. A helical membrane pass occupies residues 24–48; sequence ILYAVLGLGALLAVFGNLLVITAIL. Topologically, residues 49 to 58 are cytoplasmic; it reads HFKQLHTPTN. Residues 59–80 traverse the membrane as a helical segment; sequence FLVASLACADFLVGVTVMPFST. Topologically, residues 81–95 are extracellular; the sequence is VRSVEGCWYFGDTYC. A helical membrane pass occupies residues 96–118; sequence KFHTCFDTSFCFASLFHLCCISI. The spermidine site is built by Asp102 and Thr103. Residues 119 to 138 lie on the Cytoplasmic side of the membrane; it reads DRYVAVTDPLTYPTKFTISV. A helical membrane pass occupies residues 139 to 160; it reads SGVCIALSWFFSVTYSFSIFYT. Over 161 to 186 the chain is Extracellular; the sequence is GANEEGIEELVVALTCVGGCQAPLNQ. Residues 164–177 form an extracellular Loop 2 (ECL2) region; the sequence is EEGIEELVVALTCV. Residues 187–208 form a helical membrane-spanning segment; sequence NWVLLCFLLFFLPTVVMVFLYG. Residues 209–246 are Cytoplasmic-facing; it reads RIFLVAKQQARKIEGSANQPQASSESYKERVARRERKA. Residues 247–270 traverse the membrane as a helical segment; sequence AKTLGIAMAAFLVSWLPYIIDAVI. Topologically, residues 271–283 are extracellular; sequence DAYMNFITPAYVY. A helical transmembrane segment spans residues 284–304; sequence EILVWCVYYNSAMNPLIYAFF. The Cytoplasmic portion of the chain corresponds to 305–338; sequence YPWFRKAIKLIVSGKVFRADSSRTNLFSEEAGAG.

Belongs to the G-protein coupled receptor 1 family. As to expression, mainly expressed in neurons of the olfactory epithelium. Also expressed in the intestine.

It localises to the cell membrane. Olfactory receptor specific for trace amines, such as triethylamine, N-methylpiperidine, N,N-dimethylcyclohexylamine (DMCHA), beta-phenylethylamine (beta-PEA), cadaverine (CAD) and polyamines such as spermidine. Trace amine compounds are enriched in animal body fluids and act on trace amine-associated receptors (TAARs) to elicit both intraspecific and interspecific innate behaviors. Trace amine-binding causes a conformation change that triggers signaling via G(s)-class of G alpha proteins (GNAL or GNAS). In mature olfactory sensory neurons, Taar9 is coupled with GNAL/G(olf)G alpha protein and mediates activation of adenylate cyclase activity to activate cAMP signaling and eventually transmit odorant signals to achieve membrane depolarization. In immature olfactory sensory neurons, Taar9 is coupled with GNAS/G(s) G alpha proteins. The polypeptide is Trace amine-associated receptor 9 (Rattus norvegicus (Rat)).